Consider the following 249-residue polypeptide: Triosephosphate isomerase (249 aa).

Residue 9–11 (NWK) coordinates substrate. The active-site Electrophile is His-94. Glu-166 functions as the Proton acceptor in the catalytic mechanism. Substrate-binding positions include Gly-172, Ser-211, and 232–233 (GG).

The protein belongs to the triosephosphate isomerase family. As to quaternary structure, homodimer.

Its subcellular location is the cytoplasm. It carries out the reaction D-glyceraldehyde 3-phosphate = dihydroxyacetone phosphate. It participates in carbohydrate biosynthesis; gluconeogenesis. Its pathway is carbohydrate degradation; glycolysis; D-glyceraldehyde 3-phosphate from glycerone phosphate: step 1/1. Involved in the gluconeogenesis. Catalyzes stereospecifically the conversion of dihydroxyacetone phosphate (DHAP) to D-glyceraldehyde-3-phosphate (G3P). This Moorella thermoacetica (strain ATCC 39073 / JCM 9320) protein is Triosephosphate isomerase.